The primary structure comprises 437 residues: (S)-6-hydroxynicotine oxidase (437 aa).

FAD-binding positions include serine 16, 35–37 (EAR), arginine 43, 57–60 (GGAG), valine 231, serine 405, and 413–415 (EYI).

This sequence belongs to the flavin monoamine oxidase family. In terms of assembly, homodimer. Requires FAD as cofactor.

The catalysed reaction is (S)-6-hydroxynicotine + O2 + H2O = 6-hydroxypseudooxynicotine + H2O2. It catalyses the reaction (S)-6-hydroxynicotine + O2 = 6-hydroxy-N-methylmyosmine + H2O2. It functions in the pathway alkaloid degradation; nicotine degradation; 6-hydroxypseudooxynicotine from nicotine (S-isomer route): step 2/2. Partially inhibited by Co(2+) or Zn(2+) and significantly inhibited by Ag(+), Cu(2+) and Hg(2+). Involved in the degradation of L-nicotine. Catalyzes the oxidation of (S)-6-hydroxynicotine (6-hydroxy-L-nicotine) to 6-hydroxypseudooxynicotine. Oxidation of the pyrrolidine ring of (S)-6-hydroxynicotine leads to the formation of the optically inactive 6-hydroxy-N-methylmyosmine, which hydrolyzes spontaneously to 6-hydroxypseudooxynicotine. Acts with absolute stereospecificity on the L-form of 6-hydroxynicotine. Also involved in the degradation of nornicotine, and catalyzes the oxidation of 6-hydroxynornicotine to 6-hydroxymyosmine, which hydrolyzes to 6-hydroxypseudooxynornicotine. In vitro, converts (S)-nicotine into N-methylmyosmine, which spontaneously hydrolyzes spontaneously into pseudooxynicotine, but catalytic efficiency is about 1900-fold higher with (S)-6-hydroxynicotine. The polypeptide is (S)-6-hydroxynicotine oxidase (Shinella sp. (strain HZN7)).